The sequence spans 183 residues: Translation initiation factor IF-3 (183 aa).

Belongs to the IF-3 family. As to quaternary structure, monomer.

The protein localises to the cytoplasm. Its function is as follows. IF-3 binds to the 30S ribosomal subunit and shifts the equilibrium between 70S ribosomes and their 50S and 30S subunits in favor of the free subunits, thus enhancing the availability of 30S subunits on which protein synthesis initiation begins. The protein is Translation initiation factor IF-3 of Vibrio cholerae serotype O1 (strain ATCC 39315 / El Tor Inaba N16961).